The chain runs to 416 residues: Tyrosine-protein phosphatase non-receptor type 2 (416 aa).

The Tyrosine-protein phosphatase domain maps to Ile-5 to Gly-275. The residue at position 22 (Tyr-22) is a Phosphotyrosine. Ser-52 carries the post-translational modification Phosphoserine. At Tyr-68 the chain carries Phosphotyrosine. Substrate is bound by residues Asp-182, Cys-216–Arg-222, and Gln-260. Cys-216 acts as the Phosphocysteine intermediate in catalysis. Cys-216 is subject to S-nitrosocysteine. Phosphoserine is present on residues Ser-293, Ser-298, Ser-304, Ser-320, and Ser-339. Residues Glu-341–Leu-410 are endoplasmic reticulum location. Residues Glu-371–Leu-410 form a may mediate interaction with STX17 region.

It belongs to the protein-tyrosine phosphatase family. Non-receptor class 1 subfamily. Interacts with RMDN3. Interacts with TMED9. Interacts with STX17; dephosphorylates STX17. Interacts with ITGA1 (via cytoplasmic domain); activates the phosphatase activity towards EGFR. Interacts with TRAF2; probably involved in tumor necrosis factor-mediated signaling. Interacts with MET. Interacts with FAM220A and STAT3; interaction with FAM220A promotes interaction of PTPN2 with transcriptional activator STAT3, leading to dephosphorylation of STAT3 by PTPN2 and negative regulation of STAT3 transcriptional activator activity. Post-translationally, specifically phosphorylated in a cell cycle-dependent manner by cyclin-dependent kinases CDK1 and CDK2. Probably activated through phosphorylation by PKR. In terms of tissue distribution, does not show tissue- or cell-type specificity although levels of transcription show variability. Macrophages showed higher levels of expression than lymphocytes.

It is found in the cytoplasm. It localises to the endoplasmic reticulum-Golgi intermediate compartment. The protein resides in the endoplasmic reticulum. The protein localises to the nucleus membrane. Its subcellular location is the nucleus. It is found in the cell membrane. It carries out the reaction O-phospho-L-tyrosyl-[protein] + H2O = L-tyrosyl-[protein] + phosphate. In terms of biological role, non-receptor type tyrosine-specific phosphatase that dephosphorylates receptor protein tyrosine kinases including INSR, EGFR, CSF1R, PDGFR. Also dephosphorylates non-receptor protein tyrosine kinases like JAK1, JAK2, JAK3, Src family kinases, STAT1, STAT3 and STAT6 either in the nucleus or the cytoplasm. Negatively regulates numerous signaling pathways and biological processes like hematopoiesis, inflammatory response, cell proliferation and differentiation, and glucose homeostasis. Plays a multifaceted and important role in the development of the immune system. Functions in T-cell receptor signaling through dephosphorylation of FYN and LCK to control T-cells differentiation and activation. Dephosphorylates CSF1R, negatively regulating its downstream signaling and macrophage differentiation. Negatively regulates cytokine (IL2/interleukin-2 and interferon)-mediated signaling through dephosphorylation of the cytoplasmic kinases JAK1, JAK3 and their substrate STAT1, that propagate signaling downstream of the cytokine receptors. Also regulates the IL6/interleukin-6 and IL4/interleukin-4 cytokine signaling through dephosphorylation of STAT3 and STAT6 respectively. In addition to the immune system, it is involved in anchorage-dependent, negative regulation of EGF-stimulated cell growth. Activated by the integrin ITGA1/ITGB1, it dephosphorylates EGFR and negatively regulates EGF signaling. Dephosphorylates PDGFRB and negatively regulates platelet-derived growth factor receptor-beta signaling pathway and therefore cell proliferation. Negatively regulates tumor necrosis factor-mediated signaling downstream via MAPK through SRC dephosphorylation. May also regulate the hepatocyte growth factor receptor signaling pathway through dephosphorylation of the hepatocyte growth factor receptor MET. Also plays an important role in glucose homeostasis. For instance, negatively regulates the insulin receptor signaling pathway through the dephosphorylation of INSR and control gluconeogenesis and liver glucose production through negative regulation of the IL6 signaling pathways. May also bind DNA. The chain is Tyrosine-protein phosphatase non-receptor type 2 (Ptpn2) from Rattus norvegicus (Rat).